We begin with the raw amino-acid sequence, 287 residues long: GDT1-like protein C17G8.08c (287 aa).

Helical transmembrane passes span 7–27, 50–70, 89–109, 112–132, 194–214, 232–252, and 267–287; these read WAII…GEGM, LIFS…FIVA, ALFI…LLFP, LTDI…LMEA, VMAT…FVSE, VYGV…LAVI, and MFIG…QGFF.

It belongs to the GDT1 family.

Its subcellular location is the membrane. The protein is GDT1-like protein C17G8.08c of Schizosaccharomyces pombe (strain 972 / ATCC 24843) (Fission yeast).